The primary structure comprises 702 residues: Dynein intermediate chain 2, ciliary (702 aa).

The span at 1 to 11 (MPVKSTKTKGG) shows a compositional bias: low complexity. Disordered regions lie at residues 1 to 64 (MPVK…IKPD), 128 to 226 (DEAR…FSST), and 243 to 272 (QEKA…ETQS). Composition is skewed to basic and acidic residues over residues 36 to 52 (GKKD…HGGE) and 152 to 176 (GEEK…RDEE). Polar residues predominate over residues 189–206 (KLTNQFNFSERASQTYNN). Residues 243 to 261 (QEKAKEKKAAPSKKDDDKS) are compositionally biased toward basic and acidic residues. WD repeat units lie at residues 380–420 (PTDS…ANPV), 429–472 (KHTD…LTYT), 490–533 (TQLT…QFLD), 537–577 (AHHM…GPMF), 580–620 (DLGS…YEPI), and 628–667 (KKKT…RKVP).

It belongs to the dynein intermediate chain family. In terms of assembly, consists of at least two heavy chains (alpha and beta), three intermediate chains and several light chains.

The protein resides in the cytoplasm. It is found in the cytoskeleton. The protein localises to the cilium axoneme. In terms of biological role, microtubule-binding protein that may be involved in dynein outer arm assembly on the axoneme. The protein is Dynein intermediate chain 2, ciliary of Heliocidaris crassispina (Sea urchin).